The sequence spans 152 residues: Nascent polypeptide-associated complex subunit beta (152 aa).

Disordered regions lie at residues 19–39 and 125–152; these read IGKG…AGDD and NMQK…SKVE. A compositionally biased stretch (basic residues) spans 23–32; that stretch reads TPRRKVKRAP. The region spanning 36 to 101 is the NAC-A/B domain; that stretch reads AGDDKKLQAT…GEDKELTELV (66 aa).

This sequence belongs to the NAC-beta family. Part of the nascent polypeptide-associated complex (NAC), consisting of npc-1/egd2 and npc-2/egd1. NAC associates with ribosomes via npc-2/egd1.

Its subcellular location is the cytoplasm. The protein resides in the nucleus. Its function is as follows. Component of the nascent polypeptide-associated complex (NAC), a dynamic component of the ribosomal exit tunnel, protecting the emerging polypeptides from interaction with other cytoplasmic proteins to ensure appropriate nascent protein targeting. The NAC complex also promotes mitochondrial protein import by enhancing productive ribosome interactions with the outer mitochondrial membrane and blocks the inappropriate interaction of ribosomes translating non-secretory nascent polypeptides with translocation sites in the membrane of the endoplasmic reticulum. Npc-2/egd1 may act as a transcription factor that exert a negative effect on the expression of several genes that are transcribed by RNA polymerase II. The chain is Nascent polypeptide-associated complex subunit beta (npc-2) from Neurospora crassa (strain ATCC 24698 / 74-OR23-1A / CBS 708.71 / DSM 1257 / FGSC 987).